A 129-amino-acid chain; its full sequence is Glycine cleavage system H protein (129 aa).

The Lipoyl-binding domain occupies 23 to 105 (SAVVGITEHA…YGEGWLAKFS (83 aa)). N6-lipoyllysine is present on Lys-64.

It belongs to the GcvH family. As to quaternary structure, the glycine cleavage system is composed of four proteins: P, T, L and H. It depends on (R)-lipoate as a cofactor.

The glycine cleavage system catalyzes the degradation of glycine. The H protein shuttles the methylamine group of glycine from the P protein to the T protein. This Herpetosiphon aurantiacus (strain ATCC 23779 / DSM 785 / 114-95) protein is Glycine cleavage system H protein.